A 43-amino-acid polypeptide reads, in one-letter code: Protein PsbN (43 aa).

A helical transmembrane segment spans residues 7-29 (ITIFLSGLLVSFTGYALYTAFGQ).

This sequence belongs to the PsbN family.

Its subcellular location is the plastid membrane. Its function is as follows. May play a role in photosystem I and II biogenesis. In Cuscuta reflexa (Southern Asian dodder), this protein is Protein PsbN.